The sequence spans 181 residues: Adenine phosphoribosyltransferase (181 aa).

It belongs to the purine/pyrimidine phosphoribosyltransferase family. In terms of assembly, homodimer.

Its subcellular location is the cytoplasm. It carries out the reaction AMP + diphosphate = 5-phospho-alpha-D-ribose 1-diphosphate + adenine. It functions in the pathway purine metabolism; AMP biosynthesis via salvage pathway; AMP from adenine: step 1/1. Functionally, catalyzes a salvage reaction resulting in the formation of AMP, that is energically less costly than de novo synthesis. This chain is Adenine phosphoribosyltransferase, found in Pseudoalteromonas translucida (strain TAC 125).